Reading from the N-terminus, the 678-residue chain is Glycine--tRNA ligase beta subunit (678 aa).

It belongs to the class-II aminoacyl-tRNA synthetase family. As to quaternary structure, tetramer of two alpha and two beta subunits.

The protein localises to the cytoplasm. The enzyme catalyses tRNA(Gly) + glycine + ATP = glycyl-tRNA(Gly) + AMP + diphosphate. This chain is Glycine--tRNA ligase beta subunit, found in Streptococcus pneumoniae (strain P1031).